A 248-amino-acid chain; its full sequence is Probable transcriptional regulatory protein RL3983 (248 aa).

The protein belongs to the TACO1 family.

Its subcellular location is the cytoplasm. The protein is Probable transcriptional regulatory protein RL3983 of Rhizobium johnstonii (strain DSM 114642 / LMG 32736 / 3841) (Rhizobium leguminosarum bv. viciae).